Reading from the N-terminus, the 175-residue chain is Microfibril-associated glycoprotein 3 (175 aa).

The Cytoplasmic segment spans residues 1-175 (FRTEGAEKLQ…KDGSFESCQL (175 aa)). Residues 85 to 175 (KERPALNAQD…KDGSFESCQL (91 aa)) form a disordered region. Residues 145–175 (QDSSHFSPPDDTGSTESNSNYKDGSFESCQL) show a composition bias toward polar residues.

Post-translationally, glycosylated.

Its subcellular location is the cell membrane. Its function is as follows. Component of the elastin-associated microfibrils. This Bos taurus (Bovine) protein is Microfibril-associated glycoprotein 3 (MFAP3).